The primary structure comprises 896 residues: Translation initiation factor IF-2 (896 aa).

Basic and acidic residues predominate over residues 117 to 174 (AEAEAKAKAEAEAKAKVDAEAKVKAKAEAEAKAKAKVQTEKPAAETAEDKAAKAEEAK). The segment at 117-303 (AEAEAKAKAE…TRSVAPESMD (187 aa)) is disordered. Residues 175–195 (LLAAQDAVAKAKANEEASAAA) show a composition bias toward low complexity. Positions 196–227 (DEARRLAEENEKRWAEEEKARKEAEKSVDHHV) are enriched in basic and acidic residues. Over residues 254-268 (PSANAGNNANANAGA) the composition is skewed to low complexity. A tr-type G domain is found at 396–563 (PRAPVVTIMG…GILLEAEVLE (168 aa)). The G1 stretch occupies residues 405–412 (GHVDHGKT). 405–412 (GHVDHGKT) serves as a coordination point for GTP. A G2 region spans residues 430–434 (GITQH). A G3 region spans residues 451–454 (DTPG). GTP is bound by residues 451–455 (DTPGH) and 505–508 (NKID). Positions 505–508 (NKID) are G4. A G5 region spans residues 541 to 543 (SAK).

It belongs to the TRAFAC class translation factor GTPase superfamily. Classic translation factor GTPase family. IF-2 subfamily.

It localises to the cytoplasm. Functionally, one of the essential components for the initiation of protein synthesis. Protects formylmethionyl-tRNA from spontaneous hydrolysis and promotes its binding to the 30S ribosomal subunits. Also involved in the hydrolysis of GTP during the formation of the 70S ribosomal complex. The chain is Translation initiation factor IF-2 from Shewanella pealeana (strain ATCC 700345 / ANG-SQ1).